A 114-amino-acid chain; its full sequence is MGPGLLCWVLLCLLGAGPVDAGVTQSPTHLIKTRGQQVTLRCSPISGHKSVSWYQQVLGQGPQFIFQYYEKEERGRGNFPDRFSARQFPNYSSELNVNALLLGDSALYLCASSL.

The N-terminal stretch at 1–21 (MGPGLLCWVLLCLLGAGPVDA) is a signal peptide. The 93-residue stretch at 22–114 (GVTQSPTHLI…SALYLCASSL (93 aa)) folds into the Ig-like domain. A disulfide bridge connects residues cysteine 42 and cysteine 110. Asparagine 90 is a glycosylation site (N-linked (GlcNAc...) asparagine).

Alpha-beta TR is a heterodimer composed of an alpha and beta chain; disulfide-linked. The alpha-beta TR is associated with the transmembrane signaling CD3 coreceptor proteins to form the TR-CD3 (TcR or TCR). The assembly of alpha-beta TR heterodimers with CD3 occurs in the endoplasmic reticulum where a single alpha-beta TR heterodimer associates with one CD3D-CD3E heterodimer, one CD3G-CD3E heterodimer and one CD247 homodimer forming a stable octameric structure. CD3D-CD3E and CD3G-CD3E heterodimers preferentially associate with TR alpha and TR beta chains, respectively. The association of the CD247 homodimer is the last step of TcR assembly in the endoplasmic reticulum and is required for transport to the cell surface.

The protein resides in the cell membrane. Functionally, v region of the variable domain of T cell receptor (TR) beta chain that participates in the antigen recognition. Alpha-beta T cell receptors are antigen specific receptors which are essential to the immune response and are present on the cell surface of T lymphocytes. Recognize peptide-major histocompatibility (MH) (pMH) complexes that are displayed by antigen presenting cells (APC), a prerequisite for efficient T cell adaptive immunity against pathogens. Binding of alpha-beta TR to pMH complex initiates TR-CD3 clustering on the cell surface and intracellular activation of LCK that phosphorylates the ITAM motifs of CD3G, CD3D, CD3E and CD247 enabling the recruitment of ZAP70. In turn ZAP70 phosphorylates LAT, which recruits numerous signaling molecules to form the LAT signalosome. The LAT signalosome propagates signal branching to three major signaling pathways, the calcium, the mitogen-activated protein kinase (MAPK) kinase and the nuclear factor NF-kappa-B (NF-kB) pathways, leading to the mobilization of transcription factors that are critical for gene expression and essential for T cell growth and differentiation. The T cell repertoire is generated in the thymus, by V-(D)-J rearrangement. This repertoire is then shaped by intrathymic selection events to generate a peripheral T cell pool of self-MH restricted, non-autoaggressive T cells. Post-thymic interaction of alpha-beta TR with the pMH complexes shapes TR structural and functional avidity. In Homo sapiens (Human), this protein is T cell receptor beta variable 5-5.